The following is a 104-amino-acid chain: Larval cuticle protein 65Ab1 (104 aa).

The first 18 residues, 1–18 (MKFLIVFVALFAMAVARP), serve as a signal peptide directing secretion. A Chitin-binding type R&amp;R domain is found at 32–102 (PEKWSSDVET…PQGAHLPVAP (71 aa)).

Component of the cuticle of the larva. The protein is Larval cuticle protein 65Ab1 of Drosophila melanogaster (Fruit fly).